The sequence spans 254 residues: 3-deoxy-manno-octulosonate cytidylyltransferase (254 aa).

It belongs to the KdsB family.

It is found in the cytoplasm. The enzyme catalyses 3-deoxy-alpha-D-manno-oct-2-ulosonate + CTP = CMP-3-deoxy-beta-D-manno-octulosonate + diphosphate. Its pathway is nucleotide-sugar biosynthesis; CMP-3-deoxy-D-manno-octulosonate biosynthesis; CMP-3-deoxy-D-manno-octulosonate from 3-deoxy-D-manno-octulosonate and CTP: step 1/1. It participates in bacterial outer membrane biogenesis; lipopolysaccharide biosynthesis. Functionally, activates KDO (a required 8-carbon sugar) for incorporation into bacterial lipopolysaccharide in Gram-negative bacteria. The chain is 3-deoxy-manno-octulosonate cytidylyltransferase from Chlamydia trachomatis serovar A (strain ATCC VR-571B / DSM 19440 / HAR-13).